The chain runs to 354 residues: Sulfate/thiosulfate import ATP-binding protein CysA 2 (354 aa).

In terms of domain architecture, ABC transporter spans Ile-3–Leu-237. An ATP-binding site is contributed by Gly-35–Thr-42.

This sequence belongs to the ABC transporter superfamily. Sulfate/tungstate importer (TC 3.A.1.6) family. In terms of assembly, the complex is composed of two ATP-binding proteins (CysA), two transmembrane proteins (CysT and CysW) and a solute-binding protein (CysP).

It localises to the cell inner membrane. The catalysed reaction is sulfate(out) + ATP + H2O = sulfate(in) + ADP + phosphate + H(+). The enzyme catalyses thiosulfate(out) + ATP + H2O = thiosulfate(in) + ADP + phosphate + H(+). Part of the ABC transporter complex CysAWTP involved in sulfate/thiosulfate import. Responsible for energy coupling to the transport system. In Shewanella oneidensis (strain ATCC 700550 / JCM 31522 / CIP 106686 / LMG 19005 / NCIMB 14063 / MR-1), this protein is Sulfate/thiosulfate import ATP-binding protein CysA 2.